Reading from the N-terminus, the 77-residue chain is uncharacterized protein (77 aa).

A compositionally biased stretch (basic residues) spans 1–10; that stretch reads MFNNKGRRNV. Residues 1 to 21 form a disordered region; that stretch reads MFNNKGRRNVRNNEVRRNVPV. Residues 11-21 are compositionally biased toward basic and acidic residues; that stretch reads RNNEVRRNVPV. In terms of domain architecture, TRAM spans 20-77; it reads PVKEGETYTVTIEDMGRGGDGIARVEGFVVFVPETQKGETVNVKITAVKSKFAFAEKI.

This is an uncharacterized protein from Methanocaldococcus jannaschii (strain ATCC 43067 / DSM 2661 / JAL-1 / JCM 10045 / NBRC 100440) (Methanococcus jannaschii).